A 535-amino-acid polypeptide reads, in one-letter code: Glutamate--cysteine ligase (535 aa).

The protein belongs to the glutamate--cysteine ligase type 1 family. Type 1 subfamily.

The enzyme catalyses L-cysteine + L-glutamate + ATP = gamma-L-glutamyl-L-cysteine + ADP + phosphate + H(+). It functions in the pathway sulfur metabolism; glutathione biosynthesis; glutathione from L-cysteine and L-glutamate: step 1/2. The chain is Glutamate--cysteine ligase from Pseudomonas syringae pv. syringae (strain B728a).